We begin with the raw amino-acid sequence, 400 residues long: Na(+)/H(+) antiporter NhaA (400 aa).

Transmembrane regions (helical) follow at residues 26–46, 71–91, 107–127, 137–157, 166–186, 189–209, 212–232, 233–253, 273–293, 299–319, 340–360, and 373–393; these read AGGI…NSPL, LIHW…GMEV, IFPA…YWFI, GWAI…ALLS, IFLL…IALF, HGLS…LILL, FKVS…ASVL, KSGV…PLKG, FVIL…GIDV, PLLL…IFGF, IFAV…LASL, and LSRL…YLFL.

It belongs to the NhaA Na(+)/H(+) (TC 2.A.33) antiporter family.

The protein resides in the cell inner membrane. It carries out the reaction Na(+)(in) + 2 H(+)(out) = Na(+)(out) + 2 H(+)(in). Its function is as follows. Na(+)/H(+) antiporter that extrudes sodium in exchange for external protons. The polypeptide is Na(+)/H(+) antiporter NhaA (Haemophilus influenzae (strain 86-028NP)).